The following is a 143-amino-acid chain: Transcriptional regulator MraZ (143 aa).

SpoVT-AbrB domains lie at 5-47 (EYEH…PRGV) and 76-119 (AADM…SPRR).

The protein belongs to the MraZ family. As to quaternary structure, forms oligomers.

The protein resides in the cytoplasm. It localises to the nucleoid. In Roseiflexus castenholzii (strain DSM 13941 / HLO8), this protein is Transcriptional regulator MraZ.